Consider the following 109-residue polypeptide: Flagellar hook-basal body complex protein FliE (109 aa).

This sequence belongs to the FliE family.

It is found in the bacterial flagellum basal body. In Nitrosomonas eutropha (strain DSM 101675 / C91 / Nm57), this protein is Flagellar hook-basal body complex protein FliE.